A 378-amino-acid polypeptide reads, in one-letter code: Putative F-box protein At3g24580 (378 aa).

Positions 1-47 (MTKMSNLPNDLAEEVLSRVSLTSLRNVRLTCKDWNTLSKGESFAKNH) constitute an F-box domain.

The chain is Putative F-box protein At3g24580 from Arabidopsis thaliana (Mouse-ear cress).